The primary structure comprises 552 residues: Chaperonin GroEL (552 aa).

ATP contacts are provided by residues 29–32, Lys50, 86–90, Gly420, and Asp501; these read TAGP and DGTTT.

It belongs to the chaperonin (HSP60) family. In terms of assembly, forms a cylinder of 14 subunits composed of two heptameric rings stacked back-to-back. Interacts with the co-chaperonin GroES.

It localises to the cytoplasm. It carries out the reaction ATP + H2O + a folded polypeptide = ADP + phosphate + an unfolded polypeptide.. Functionally, together with its co-chaperonin GroES, plays an essential role in assisting protein folding. The GroEL-GroES system forms a nano-cage that allows encapsulation of the non-native substrate proteins and provides a physical environment optimized to promote and accelerate protein folding. In Wolbachia pipientis subsp. Culex pipiens (strain wPip), this protein is Chaperonin GroEL.